Here is a 345-residue protein sequence, read N- to C-terminus: Biotin synthase (345 aa).

The Radical SAM core domain maps to 66–293 (NTVQLSTLLS…RAMVRLSAGR (228 aa)). [4Fe-4S] cluster-binding residues include Cys81, Cys85, and Cys88. Positions 125, 156, 216, and 288 each coordinate [2Fe-2S] cluster.

This sequence belongs to the radical SAM superfamily. Biotin synthase family. In terms of assembly, homodimer. Requires [4Fe-4S] cluster as cofactor. The cofactor is [2Fe-2S] cluster.

The enzyme catalyses (4R,5S)-dethiobiotin + (sulfur carrier)-SH + 2 reduced [2Fe-2S]-[ferredoxin] + 2 S-adenosyl-L-methionine = (sulfur carrier)-H + biotin + 2 5'-deoxyadenosine + 2 L-methionine + 2 oxidized [2Fe-2S]-[ferredoxin]. It participates in cofactor biosynthesis; biotin biosynthesis; biotin from 7,8-diaminononanoate: step 2/2. Functionally, catalyzes the conversion of dethiobiotin (DTB) to biotin by the insertion of a sulfur atom into dethiobiotin via a radical-based mechanism. This Cupriavidus metallidurans (strain ATCC 43123 / DSM 2839 / NBRC 102507 / CH34) (Ralstonia metallidurans) protein is Biotin synthase.